Here is a 520-residue protein sequence, read N- to C-terminus: MEGVLYKWTNYLSGWQPRWFLLCGGILSYYDSPEDAWKGCKGSIQMAVCEIQVHSVDNTRMDLIIPGEQYFYLKARSVAERQRWLVALGSAKACLTDSRTQKEKEFAENTENLKTKMSELRLYCDLLVQQVDKTKEVTTTGVSSSEEGIDVGTLLKSTCNTFLKTLEECMQIANAAFTSELLYRTPPGSPQLAMLKSNKMKHPIVPIHNSLERQMELNSCENGSLNMEINDDEEILVRNKSSLCLKPAETDCSISSEENTDDNITVQGEMMKENGEESLGNHDSDLAQPELHSTSSSPESHWEEDQEVIPTFFSTMNTSFSDIELLEDSGIPTEAFLASCYAVVPVLDKLGPTVFAPVKMDLVGNIKKVNQKYITNKEEFTTLQKIVLHEVEADVAQVRNSATEALLWLKRGLKFLKGFLTEVKNGEKDIQTALNNAYGKTLRQHHGWVVRGVFALALRAAPSYEDFVAALTIKEGDHQKAAFSVGMQRDLSLYLPAMEKQLAILDTLYEVHGLESDEVV.

The PH domain maps to 1-93; that stretch reads MEGVLYKWTN…WLVALGSAKA (93 aa). Phosphothreonine is present on Thr139. Phosphoserine is present on Ser145. Thr153 carries the phosphothreonine modification. Over residues 275 to 285 the composition is skewed to basic and acidic residues; that stretch reads GEESLGNHDSD. Positions 275 to 305 are disordered; that stretch reads GEESLGNHDSDLAQPELHSTSSSPESHWEED. Residues 311-520 form a glycolipid transfer protein homology domain region; that stretch reads TFFSTMNTSF…VHGLESDEVV (210 aa).

Homodimer. Interacts with ARF1; the interaction together with phosphatidylinositol 4-phosphate binding is required for FAPP2 GlcCer transfer ability.

The protein resides in the cytoplasm. Its subcellular location is the golgi apparatus. It is found in the trans-Golgi network membrane. It localises to the membrane. Functionally, cargo transport protein that is required for apical transport from the trans-Golgi network (TGN). Transports AQP2 from the trans-Golgi network (TGN) to sites of AQP2 phosphorylation. Mediates the non-vesicular transport of glucosylceramide (GlcCer) from the trans-Golgi network (TGN) to the plasma membrane and plays a pivotal role in the synthesis of complex glycosphingolipids. Binding of both phosphatidylinositol 4-phosphate (PIP) and ARF1 are essential for the GlcCer transfer ability. Also required for primary cilium formation, possibly by being involved in the transport of raft lipids to the apical membrane, and for membrane tubulation. This chain is Pleckstrin homology domain-containing family A member 8 (PLEKHA8), found in Bos taurus (Bovine).